A 255-amino-acid chain; its full sequence is Aliphatic sulfonates import ATP-binding protein SsuB (255 aa).

In terms of domain architecture, ABC transporter spans 7-231 (IKEKAFVQEG…PRNRTTPDFQ (225 aa)). 39–46 (GPSGCGKS) serves as a coordination point for ATP.

The protein belongs to the ABC transporter superfamily. Aliphatic sulfonates importer (TC 3.A.1.17.2) family. The complex is composed of two ATP-binding proteins (SsuB), two transmembrane proteins (SsuC) and a solute-binding protein (SsuA).

It localises to the cell membrane. The enzyme catalyses ATP + H2O + aliphatic sulfonate-[sulfonate-binding protein]Side 1 = ADP + phosphate + aliphatic sulfonateSide 2 + [sulfonate-binding protein]Side 1.. Part of the ABC transporter complex SsuABC involved in aliphatic sulfonates import. Responsible for energy coupling to the transport system. Is also involved in taurine transport. This is Aliphatic sulfonates import ATP-binding protein SsuB from Bacillus subtilis (strain 168).